The chain runs to 142 residues: Large ribosomal subunit protein uL13 (142 aa).

It belongs to the universal ribosomal protein uL13 family. As to quaternary structure, part of the 50S ribosomal subunit.

In terms of biological role, this protein is one of the early assembly proteins of the 50S ribosomal subunit, although it is not seen to bind rRNA by itself. It is important during the early stages of 50S assembly. In Shewanella frigidimarina (strain NCIMB 400), this protein is Large ribosomal subunit protein uL13.